Consider the following 392-residue polypeptide: Phospho-N-acetylmuramoyl-pentapeptide-transferase (392 aa).

The next 10 membrane-spanning stretches (helical) occupy residues 28–48, 76–96, 100–120, 137–157, 193–213, 225–245, 262–282, 289–309, 314–334, and 369–389; these read RALMAAMTALLIGLLAGPFVI, TMGGVLILLAIGISTLLWFDL, FVWIVLLVTLGFGAIGWVDDW, YLWQSVVGLIAALYLVFSISE, ISYPLGVFGFVILTYLVIVGS, GLAIMPVVMVGSSLGVFAYVT, SGELLIFCAAMAGSGLAFLWF, VFMGDVGALALGAALGTIAVI, IVLAIMGGIFVVEALSVMLQV, and QVVVRFWIITMLLCLVGLSTL.

It belongs to the glycosyltransferase 4 family. MraY subfamily. Requires Mg(2+) as cofactor.

The protein resides in the cell inner membrane. The catalysed reaction is UDP-N-acetyl-alpha-D-muramoyl-L-alanyl-gamma-D-glutamyl-meso-2,6-diaminopimeloyl-D-alanyl-D-alanine + di-trans,octa-cis-undecaprenyl phosphate = di-trans,octa-cis-undecaprenyl diphospho-N-acetyl-alpha-D-muramoyl-L-alanyl-D-glutamyl-meso-2,6-diaminopimeloyl-D-alanyl-D-alanine + UMP. It participates in cell wall biogenesis; peptidoglycan biosynthesis. In terms of biological role, catalyzes the initial step of the lipid cycle reactions in the biosynthesis of the cell wall peptidoglycan: transfers peptidoglycan precursor phospho-MurNAc-pentapeptide from UDP-MurNAc-pentapeptide onto the lipid carrier undecaprenyl phosphate, yielding undecaprenyl-pyrophosphoryl-MurNAc-pentapeptide, known as lipid I. The chain is Phospho-N-acetylmuramoyl-pentapeptide-transferase from Polaromonas naphthalenivorans (strain CJ2).